Consider the following 438-residue polypeptide: MPKYEDKVDLYDDRGNLVEEQVPIEALSPLRNTAIKKIIHDIKRTVAVNLEGIENALRSAKVGGSGCHIPGRELDVDVIDNAEAIAEKAKEMIQVEEGDDTVVELLHDGKRALVKVPSSRLESAAEYSVAPLVTASAFIQSIIDVCDISIYDANMVKAAVLGRYPQSVEYVGGNIATMLDIPQKLEGPGYALRNILVNHIVAATLKNTLQAVALSSILEHTAMFEMGDAVGKFERLHLLGLAYQGLNADNLLYDLVKANGKDGTVGSVVEDVVERAKEDGVIKVEKELNGYKVYGTDDLALWNAYAAAGLVAATIVNQGAARAAQGVSSTILYDNDIIEFERGLPGVDFGRAEGTAVGFSFFSHSIYGGGGPGIFNGNHIVTRHSKGFAIPCVAAAMALDAGTQMFSPELTSGLIKDVFSKVDEFREPLKYVVELQPK.

Tyr367 serves as a coordination point for coenzyme M. Gly369 provides a ligand contact to coenzyme B.

The protein belongs to the methyl-coenzyme M reductase beta subunit family. As to quaternary structure, MCR is a hexamer of two alpha, two beta, and two gamma chains, forming a dimer of heterotrimers. Coenzyme F430 is required as a cofactor.

It localises to the cytoplasm. It carries out the reaction coenzyme B + methyl-coenzyme M = methane + coenzyme M-coenzyme B heterodisulfide. It functions in the pathway one-carbon metabolism; methyl-coenzyme M reduction; methane from methyl-coenzyme M: step 1/1. Its function is as follows. Component of the methyl-coenzyme M reductase (MCR) I that catalyzes the reductive cleavage of methyl-coenzyme M (CoM-S-CH3 or 2-(methylthio)ethanesulfonate) using coenzyme B (CoB or 7-mercaptoheptanoylthreonine phosphate) as reductant which results in the production of methane and the mixed heterodisulfide of CoB and CoM (CoM-S-S-CoB). This is the final step in methanogenesis. The sequence is that of Methyl-coenzyme M reductase subunit beta (mcrB) from Methanothermus fervidus.